Consider the following 416-residue polypeptide: tRNA(Met) cytidine acetate ligase (416 aa).

Residues 7-20 (VVEY…HLHH), Gly101, Asn162, and 187-188 (RI) contribute to the ATP site.

This sequence belongs to the TmcAL family.

It is found in the cytoplasm. The enzyme catalyses cytidine(34) in elongator tRNA(Met) + acetate + ATP = N(4)-acetylcytidine(34) in elongator tRNA(Met) + AMP + diphosphate. In terms of biological role, catalyzes the formation of N(4)-acetylcytidine (ac(4)C) at the wobble position of elongator tRNA(Met), using acetate and ATP as substrates. First activates an acetate ion to form acetyladenylate (Ac-AMP) and then transfers the acetyl group to tRNA to form ac(4)C34. This is tRNA(Met) cytidine acetate ligase from Halalkalibacterium halodurans (strain ATCC BAA-125 / DSM 18197 / FERM 7344 / JCM 9153 / C-125) (Bacillus halodurans).